We begin with the raw amino-acid sequence, 211 residues long: Large ribosomal subunit protein uL3 (211 aa).

The protein belongs to the universal ribosomal protein uL3 family. In terms of assembly, part of the 50S ribosomal subunit. Forms a cluster with proteins L14 and L19.

One of the primary rRNA binding proteins, it binds directly near the 3'-end of the 23S rRNA, where it nucleates assembly of the 50S subunit. This chain is Large ribosomal subunit protein uL3, found in Geotalea daltonii (strain DSM 22248 / JCM 15807 / FRC-32) (Geobacter daltonii).